A 352-amino-acid polypeptide reads, in one-letter code: Holliday junction branch migration complex subunit RuvB (352 aa).

The tract at residues 5-191 (TDDFSEQRII…FGIVARLEFY (187 aa)) is large ATPase domain (RuvB-L). ATP contacts are provided by residues Leu30, Arg31, Gly72, Lys75, Thr76, Thr77, 138–140 (EDY), Arg181, Tyr191, and Arg228. Thr76 provides a ligand contact to Mg(2+). Residues 192 to 262 (TPLELTKIVT…MADAALVMLD (71 aa)) are small ATPAse domain (RuvB-S). The interval 265-352 (PVGFDLMDRK…GPNGDLWAGQ (88 aa)) is head domain (RuvB-H). Residues Arg301, Arg320, and Arg325 each coordinate DNA.

Belongs to the RuvB family. Homohexamer. Forms an RuvA(8)-RuvB(12)-Holliday junction (HJ) complex. HJ DNA is sandwiched between 2 RuvA tetramers; dsDNA enters through RuvA and exits via RuvB. An RuvB hexamer assembles on each DNA strand where it exits the tetramer. Each RuvB hexamer is contacted by two RuvA subunits (via domain III) on 2 adjacent RuvB subunits; this complex drives branch migration. In the full resolvosome a probable DNA-RuvA(4)-RuvB(12)-RuvC(2) complex forms which resolves the HJ.

The protein resides in the cytoplasm. It carries out the reaction ATP + H2O = ADP + phosphate + H(+). In terms of biological role, the RuvA-RuvB-RuvC complex processes Holliday junction (HJ) DNA during genetic recombination and DNA repair, while the RuvA-RuvB complex plays an important role in the rescue of blocked DNA replication forks via replication fork reversal (RFR). RuvA specifically binds to HJ cruciform DNA, conferring on it an open structure. The RuvB hexamer acts as an ATP-dependent pump, pulling dsDNA into and through the RuvAB complex. RuvB forms 2 homohexamers on either side of HJ DNA bound by 1 or 2 RuvA tetramers; 4 subunits per hexamer contact DNA at a time. Coordinated motions by a converter formed by DNA-disengaged RuvB subunits stimulates ATP hydrolysis and nucleotide exchange. Immobilization of the converter enables RuvB to convert the ATP-contained energy into a lever motion, pulling 2 nucleotides of DNA out of the RuvA tetramer per ATP hydrolyzed, thus driving DNA branch migration. The RuvB motors rotate together with the DNA substrate, which together with the progressing nucleotide cycle form the mechanistic basis for DNA recombination by continuous HJ branch migration. Branch migration allows RuvC to scan DNA until it finds its consensus sequence, where it cleaves and resolves cruciform DNA. This chain is Holliday junction branch migration complex subunit RuvB, found in Janthinobacterium sp. (strain Marseille) (Minibacterium massiliensis).